The primary structure comprises 527 residues: Peptide chain release factor 3 (527 aa).

One can recognise a tr-type G domain in the interval 10–278 (DRRRTFAIIS…TFVENAPAPL (269 aa)). GTP is bound by residues 19-26 (SHPDAGKT), 87-91 (DTPGH), and 141-144 (NKLD).

Belongs to the TRAFAC class translation factor GTPase superfamily. Classic translation factor GTPase family. PrfC subfamily.

It is found in the cytoplasm. Its function is as follows. Increases the formation of ribosomal termination complexes and stimulates activities of RF-1 and RF-2. It binds guanine nucleotides and has strong preference for UGA stop codons. It may interact directly with the ribosome. The stimulation of RF-1 and RF-2 is significantly reduced by GTP and GDP, but not by GMP. In Geobacter metallireducens (strain ATCC 53774 / DSM 7210 / GS-15), this protein is Peptide chain release factor 3.